Reading from the N-terminus, the 629-residue chain is Probable potassium transport system protein Kup 3 (629 aa).

12 helical membrane-spanning segments follow: residues 20–40 (LSLS…LYTF), 54–74 (VTTI…IASV), 106–126 (PFII…GTIT), 143–163 (PSLK…LFAI), 171–191 (IGKA…ILGA), 212–232 (FLFS…LCAT), 253–273 (WFGL…ALVL), 291–311 (FLLP…QAII), 343–363 (IYIG…IIGF), 372–392 (AYGI…FIAL), 400–420 (IITS…FFAA), and 425–445 (FING…MMYI).

It belongs to the HAK/KUP transporter (TC 2.A.72) family.

It is found in the cell inner membrane. The enzyme catalyses K(+)(in) + H(+)(in) = K(+)(out) + H(+)(out). Transport of potassium into the cell. Likely operates as a K(+):H(+) symporter. The polypeptide is Probable potassium transport system protein Kup 3 (Legionella pneumophila (strain Paris)).